The following is a 369-amino-acid chain: GDSL esterase/lipase At5g42170 (369 aa).

A signal peptide spans 1-16 (MSRLVYVIFLLVVVEG). Residues asparagine 28 and asparagine 45 are each glycosylated (N-linked (GlcNAc...) asparagine). Serine 57 (nucleophile) is an active-site residue. N-linked (GlcNAc...) asparagine glycosylation is found at asparagine 203 and asparagine 336. Active-site residues include aspartate 344 and histidine 347.

This sequence belongs to the 'GDSL' lipolytic enzyme family.

It is found in the secreted. The sequence is that of GDSL esterase/lipase At5g42170 from Arabidopsis thaliana (Mouse-ear cress).